The following is a 231-amino-acid chain: Large ribosomal subunit protein uL1 (231 aa).

This sequence belongs to the universal ribosomal protein uL1 family. In terms of assembly, part of the 50S ribosomal subunit.

Its function is as follows. Binds directly to 23S rRNA. The L1 stalk is quite mobile in the ribosome, and is involved in E site tRNA release. Functionally, protein L1 is also a translational repressor protein, it controls the translation of the L11 operon by binding to its mRNA. The sequence is that of Large ribosomal subunit protein uL1 from Saccharophagus degradans (strain 2-40 / ATCC 43961 / DSM 17024).